A 682-amino-acid chain; its full sequence is Glucan endo-1,3-beta-glucosidase A1 (682 aa).

The N-terminal stretch at Met1 to Ala38 is a signal peptide. The GH16 domain occupies Tyr391 to Gln682. The Nucleophile role is filled by Glu552. The active-site Proton donor is Glu557.

The protein belongs to the glycosyl hydrolase 16 family.

It is found in the secreted. The enzyme catalyses Hydrolysis of (1-&gt;3)-beta-D-glucosidic linkages in (1-&gt;3)-beta-D-glucans.. Its function is as follows. Lysis of cellular walls containing beta-1,3-glucans. Implicated in the defense against fungal pathogens. This chain is Glucan endo-1,3-beta-glucosidase A1 (glcA), found in Niallia circulans (Bacillus circulans).